A 314-amino-acid polypeptide reads, in one-letter code: Olfactory receptor 4Q2 (314 aa).

Over methionine 1–glycine 26 the chain is Extracellular. Asparagine 4 carries N-linked (GlcNAc...) asparagine glycosylation. A helical transmembrane segment spans residues leucine 27–valine 47. Residues threonine 48–tyrosine 61 lie on the Cytoplasmic side of the membrane. The chain crosses the membrane as a helical span at residues phenylalanine 62 to alanine 84. At aspartate 85–cysteine 98 the chain is on the extracellular side. A disulfide bond links cysteine 98 and cysteine 181. The chain crosses the membrane as a helical span at residues isoleucine 99–methionine 119. At alanine 120–cysteine 142 the chain is on the cytoplasmic side. Residues cysteine 143 to leucine 163 traverse the membrane as a helical segment. At threonine 164–valine 196 the chain is on the extracellular side. The chain crosses the membrane as a helical span at residues isoleucine 197–isoleucine 217. The Cytoplasmic segment spans residues serine 218–alanine 236. A helical membrane pass occupies residues leucine 237 to isoleucine 257. The Extracellular segment spans residues tyrosine 258 to aspartate 268. Residues lysine 269–leucine 289 form a helical membrane-spanning segment. Residues arginine 290–threonine 314 lie on the Cytoplasmic side of the membrane.

The protein belongs to the G-protein coupled receptor 1 family.

Its subcellular location is the cell membrane. Its function is as follows. Odorant receptor. This is Olfactory receptor 4Q2 (OR4Q2) from Homo sapiens (Human).